The primary structure comprises 207 residues: Fibronectin type III domain-containing protein 5b (207 aa).

The N-terminal stretch at M1–A26 is a signal peptide. Residues D27–R146 are Extracellular-facing. The Fibronectin type-III domain maps to A31–E122. 2 N-linked (GlcNAc...) asparagine glycosylation sites follow: N34 and N79. A helical transmembrane segment spans residues A147 to F167. The Cytoplasmic portion of the chain corresponds to C168 to V207. A compositionally biased stretch (basic and acidic residues) spans E178–N188. The interval E178 to V207 is disordered. The Microbody targeting signal signature appears at S205–V207.

Dimer; may exist in other oligomeric forms. The extracellular domain is cleaved and released from the cell membrane.

The protein resides in the cell membrane. The protein localises to the peroxisome membrane. It is found in the secreted. May mediate beneficial effects of muscular exercise. In Danio rerio (Zebrafish), this protein is Fibronectin type III domain-containing protein 5b (fndc5b).